A 959-amino-acid chain; its full sequence is Glycine dehydrogenase (decarboxylating) (959 aa).

Lys707 carries the post-translational modification N6-(pyridoxal phosphate)lysine.

Belongs to the GcvP family. In terms of assembly, the glycine cleavage system is composed of four proteins: P, T, L and H. Requires pyridoxal 5'-phosphate as cofactor.

It carries out the reaction N(6)-[(R)-lipoyl]-L-lysyl-[glycine-cleavage complex H protein] + glycine + H(+) = N(6)-[(R)-S(8)-aminomethyldihydrolipoyl]-L-lysyl-[glycine-cleavage complex H protein] + CO2. The glycine cleavage system catalyzes the degradation of glycine. The P protein binds the alpha-amino group of glycine through its pyridoxal phosphate cofactor; CO(2) is released and the remaining methylamine moiety is then transferred to the lipoamide cofactor of the H protein. This is Glycine dehydrogenase (decarboxylating) from Photobacterium profundum (strain SS9).